We begin with the raw amino-acid sequence, 147 residues long: MQPSWTPAPVQRTACNITAWGGEFGKEGEGRCEQVALSSGPPEGALHASREGPQPPGAENLRPSTGETFVQSGRWDGGWRGAMKGRRHRQASTPPTRPESIFVPTAQDGAQMVCKAHTRTTQYTEQDSVVTARGLLDAKRVGVAGGS.

The tract at residues 30 to 102 is disordered; the sequence is GRCEQVALSS…TPPTRPESIF (73 aa). The segment covering 62-71 has biased composition (polar residues); sequence RPSTGETFVQ.

This is an uncharacterized protein from Homo sapiens (Human).